A 369-amino-acid polypeptide reads, in one-letter code: Signal recognition particle receptor FtsY (369 aa).

Over residues 20–42 the composition is skewed to basic and acidic residues; that stretch reads GEENKKEPETRQTDQLESKKEET. The disordered stretch occupies residues 20–58; that stretch reads GEENKKEPETRQTDQLESKKEETIQQQQNVQQPQAENKI. A compositionally biased stretch (low complexity) spans 44 to 53; that stretch reads QQQQNVQQPQ. GTP is bound by residues 180–187, 262–266, and 320–323; these read GVNGVGKT, DTAGR, and TKVD.

It belongs to the GTP-binding SRP family. FtsY subfamily. In terms of assembly, part of the signal recognition particle protein translocation system, which is composed of SRP and FtsY.

It is found in the cell membrane. Its subcellular location is the cytoplasm. It catalyses the reaction GTP + H2O = GDP + phosphate + H(+). Its function is as follows. Involved in targeting and insertion of nascent membrane proteins into the cytoplasmic membrane. Acts as a receptor for the complex formed by the signal recognition particle (SRP) and the ribosome-nascent chain (RNC). The polypeptide is Signal recognition particle receptor FtsY (Sulfolobus acidocaldarius (strain ATCC 33909 / DSM 639 / JCM 8929 / NBRC 15157 / NCIMB 11770)).